We begin with the raw amino-acid sequence, 256 residues long: Non-homologous end joining protein Ku 2 (256 aa).

Positions 13 to 184 (FADTDVAVKL…SLELQESPVS (172 aa)) constitute a Ku domain.

The protein belongs to the prokaryotic Ku family. In terms of assembly, homodimer. Interacts with LigD.

Functionally, with LigD forms a non-homologous end joining (NHEJ) DNA repair enzyme, which repairs dsDNA breaks with reduced fidelity. Binds linear dsDNA with 5'- and 3'- overhangs but not closed circular dsDNA nor ssDNA. Recruits and stimulates the ligase activity of LigD. The polypeptide is Non-homologous end joining protein Ku 2 (Geotalea uraniireducens (strain Rf4) (Geobacter uraniireducens)).